The primary structure comprises 120 residues: LOB domain-containing protein 8 (120 aa).

Residues 8 to 109 enclose the LOB domain; the sequence is RPCCVCITKN…AYLHELEEKI (102 aa).

Belongs to the LOB domain-containing protein family.

The protein is LOB domain-containing protein 8 (LBD8) of Arabidopsis thaliana (Mouse-ear cress).